A 949-amino-acid polypeptide reads, in one-letter code: Glycine dehydrogenase (decarboxylating) (949 aa).

Lysine 704 carries the post-translational modification N6-(pyridoxal phosphate)lysine.

This sequence belongs to the GcvP family. In terms of assembly, the glycine cleavage system is composed of four proteins: P, T, L and H. Requires pyridoxal 5'-phosphate as cofactor.

The enzyme catalyses N(6)-[(R)-lipoyl]-L-lysyl-[glycine-cleavage complex H protein] + glycine + H(+) = N(6)-[(R)-S(8)-aminomethyldihydrolipoyl]-L-lysyl-[glycine-cleavage complex H protein] + CO2. In terms of biological role, the glycine cleavage system catalyzes the degradation of glycine. The P protein binds the alpha-amino group of glycine through its pyridoxal phosphate cofactor; CO(2) is released and the remaining methylamine moiety is then transferred to the lipoamide cofactor of the H protein. This is Glycine dehydrogenase (decarboxylating) from Bacteroides fragilis (strain ATCC 25285 / DSM 2151 / CCUG 4856 / JCM 11019 / LMG 10263 / NCTC 9343 / Onslow / VPI 2553 / EN-2).